Reading from the N-terminus, the 151-residue chain is SsrA-binding protein (151 aa).

Belongs to the SmpB family.

The protein localises to the cytoplasm. Its function is as follows. Required for rescue of stalled ribosomes mediated by trans-translation. Binds to transfer-messenger RNA (tmRNA), required for stable association of tmRNA with ribosomes. tmRNA and SmpB together mimic tRNA shape, replacing the anticodon stem-loop with SmpB. tmRNA is encoded by the ssrA gene; the 2 termini fold to resemble tRNA(Ala) and it encodes a 'tag peptide', a short internal open reading frame. During trans-translation Ala-aminoacylated tmRNA acts like a tRNA, entering the A-site of stalled ribosomes, displacing the stalled mRNA. The ribosome then switches to translate the ORF on the tmRNA; the nascent peptide is terminated with the 'tag peptide' encoded by the tmRNA and targeted for degradation. The ribosome is freed to recommence translation, which seems to be the essential function of trans-translation. The polypeptide is SsrA-binding protein (Lactobacillus acidophilus (strain ATCC 700396 / NCK56 / N2 / NCFM)).